The chain runs to 304 residues: Methionyl-tRNA formyltransferase (304 aa).

111-114 contributes to the (6S)-5,6,7,8-tetrahydrofolate binding site; sequence SLLP.

The protein belongs to the Fmt family.

It carries out the reaction L-methionyl-tRNA(fMet) + (6R)-10-formyltetrahydrofolate = N-formyl-L-methionyl-tRNA(fMet) + (6S)-5,6,7,8-tetrahydrofolate + H(+). In terms of biological role, attaches a formyl group to the free amino group of methionyl-tRNA(fMet). The formyl group appears to play a dual role in the initiator identity of N-formylmethionyl-tRNA by promoting its recognition by IF2 and preventing the misappropriation of this tRNA by the elongation apparatus. The chain is Methionyl-tRNA formyltransferase from Campylobacter fetus subsp. fetus (strain 82-40).